A 937-amino-acid polypeptide reads, in one-letter code: Protein SEY1 homolog (937 aa).

Residues 1 to 848 are Cytoplasmic-facing; it reads MEKGVEKTQI…ETGSKMSLKN (848 aa). One can recognise a GB1/RHD3-type G domain in the interval 34-280; it reads GFSYNVIAVL…IPSDGFAQYC (247 aa). 44–51 is a GTP binding site; sequence GSQSSGKS. 2 coiled-coil regions span residues 319–339 and 725–750; these read NKEI…NFKE and YLDE…IIIQ. A helical transmembrane segment spans residues 849–869; the sequence is VPVVFWIILLLFGWNEILFFI. Topologically, residues 870-872 are lumenal; the sequence is RMF. A helical transmembrane segment spans residues 873–893; that stretch reads FKLNVILPLFFAAAFIVSTFV. Residues 894-937 are Cytoplasmic-facing; it reads YNGNTQALSYINKIIFYMAKNSYNFFKHIQAISNPPPKNVQKQE.

It belongs to the TRAFAC class dynamin-like GTPase superfamily. GB1/RHD3 GTPase family. RHD3 subfamily.

The protein resides in the endoplasmic reticulum membrane. Its function is as follows. Probable GTP-binding protein involved in generating and maintaining the structure of the tubular endoplasmic reticulum network. This Plasmodium falciparum (isolate 3D7) protein is Protein SEY1 homolog.